The following is an 872-amino-acid chain: DNA mismatch repair protein MutS (872 aa).

623-630 (GPNMAGKS) is an ATP binding site.

The protein belongs to the DNA mismatch repair MutS family.

Functionally, this protein is involved in the repair of mismatches in DNA. It is possible that it carries out the mismatch recognition step. This protein has a weak ATPase activity. The chain is DNA mismatch repair protein MutS from Trichlorobacter lovleyi (strain ATCC BAA-1151 / DSM 17278 / SZ) (Geobacter lovleyi).